A 465-amino-acid polypeptide reads, in one-letter code: Adenosine 3'-phospho 5'-phosphosulfate transporter 1 (465 aa).

10 consecutive transmembrane segments (helical) span residues 13-33 (LVIC…SDLL), 61-81 (FLKL…GFLI), 142-162 (AVQL…WGVL), 185-205 (QFLV…YLQW), 270-290 (SYEY…MSGS), 299-319 (VTTL…SFTA), 339-359 (GVNL…GGFM), 370-390 (KFVF…LFIY), 391-407 (HTID…IMTL), and 424-444 (ISLL…LRVY).

Belongs to the nucleotide-sugar transporter family. SLC35B subfamily. Expressed throughout embryogenesis. During oogenesis, it is expressed strongly in the nurse cells of the germline. Maternally expressed at the syncytial blastoderm stage. Zygotically expressed, from after germ-band elongation in the invaginating salivary gland placodes. Remains expressed predominantly in this tissue throughout embryogenesis, but low-level expression may also be present throughout the embryo.

The protein localises to the golgi apparatus membrane. Functionally, mediates the transport of adenosine 3'-phospho 5'-phosphosulfate (PAPS), from cytosol into Golgi. PAPS is a universal sulfuryl donor for sulfation events that take place in the Golgi. Required for the dorsoventral patterning, suggesting that it mediates the transport of the sulfate donor required for the sulfotransferase activity of pip (pipe). This chain is Adenosine 3'-phospho 5'-phosphosulfate transporter 1 (sll), found in Drosophila melanogaster (Fruit fly).